The sequence spans 305 residues: MSQSDLDRQIAQLRNCENITEGEVKALCTKAREILVEESNVQRVDAPVTICGDIHGQFFDLMELFKVGGDCPDTNYLFLGDFVDRGFNSVETFLLLLALKVRYPDRITLIRGNHESRQITQVYGFYDECLRKYGSLNVWRYCTDIFDYLSLAAVIEEKIFCVHGGLSPSIKTMDDIRAIDRKQEVPHDGAMCDLMWSDPDEIEGWNLSPRGAGYLFGGDVVDDFNRKNNIELICRAHQLVMEGYRVMFNEQLVTVWSAPNYCYRCGNVASILELDENLTKQYKIFEAAQENKGLPAKKPIPDYFL.

The Mn(2+) site is built by Asp-53, His-55, Asp-81, and Asn-113. The active-site Proton donor is the His-114. His-163 and His-237 together coordinate Mn(2+).

This sequence belongs to the PPP phosphatase family. PP-4 (PP-X) subfamily. Mn(2+) is required as a cofactor.

The catalysed reaction is O-phospho-L-seryl-[protein] + H2O = L-seryl-[protein] + phosphate. The enzyme catalyses O-phospho-L-threonyl-[protein] + H2O = L-threonyl-[protein] + phosphate. The protein is Serine/threonine-protein phosphatase PP-X homolog 3 (Ppx3) of Paramecium tetraurelia.